We begin with the raw amino-acid sequence, 129 residues long: Ig lambda-1 chain V region S43 (129 aa).

The first 19 residues, 1–19 (MAWISLILSLLALSSGAIS), serve as a signal peptide directing secretion. Q20 is modified (pyrrolidone carboxylic acid). In terms of domain architecture, Ig-like spans 20-125 (QAVVTQESAL…HWVFGGGTKL (106 aa)).

The sequence is that of Ig lambda-1 chain V region S43 from Mus musculus (Mouse).